Reading from the N-terminus, the 130-residue chain is Small ribosomal subunit protein uS11 (130 aa).

It belongs to the universal ribosomal protein uS11 family. As to quaternary structure, part of the 30S ribosomal subunit. Interacts with proteins S7 and S18. Binds to IF-3.

Functionally, located on the platform of the 30S subunit, it bridges several disparate RNA helices of the 16S rRNA. Forms part of the Shine-Dalgarno cleft in the 70S ribosome. This Thermotoga maritima (strain ATCC 43589 / DSM 3109 / JCM 10099 / NBRC 100826 / MSB8) protein is Small ribosomal subunit protein uS11.